The sequence spans 86 residues: UPF0297 protein SSP1144 (86 aa).

Belongs to the UPF0297 family.

In Staphylococcus saprophyticus subsp. saprophyticus (strain ATCC 15305 / DSM 20229 / NCIMB 8711 / NCTC 7292 / S-41), this protein is UPF0297 protein SSP1144.